Here is a 90-residue protein sequence, read N- to C-terminus: U7-theraphotoxin-Hhn1h (90 aa).

A signal peptide spans 1–19 (MKTAIFTVVLALAVFAVLS). Residues 20-50 (FGWEANEKALSEEFTELIHEKEAASETEARE) constitute a propeptide that is removed on maturation. 3 disulfide bridges follow: C51-C65, C58-C70, and C64-C81.

It belongs to the neurotoxin 10 (Hwtx-1) family. 13 (Hntx-13) subfamily. In terms of tissue distribution, expressed by the venom gland.

It is found in the secreted. Ion channel inhibitor. This Cyriopagopus hainanus (Chinese bird spider) protein is U7-theraphotoxin-Hhn1h.